The following is an 82-amino-acid chain: Large ribosomal subunit protein bL31B (82 aa).

Belongs to the bacterial ribosomal protein bL31 family. Type B subfamily. Part of the 50S ribosomal subunit after the end of exponential growth.

Its function is as follows. While neither of the L31 paralogs is essential, this protein does not seem to function as the main L31 protein. Has a higher affinity for 70S ribosomes than the zinc-containing L31 paralog; is able to displace it to varying extents, even under zinc-replete conditions. The polypeptide is Large ribosomal subunit protein bL31B (rpmE2) (Bacillus subtilis (strain 168)).